Here is a 148-residue protein sequence, read N- to C-terminus: Puroindoline-A (148 aa).

An N-terminal signal peptide occupies residues 1–19; the sequence is MKALFLIGLLALVASTAFA. Positions 20-28 are excised as a propeptide; it reads QYSEVVGSY. The propeptide at 147-148 is removed in mature form; it reads YW.

Five disulfide bonds are present. Endosperm and aleurone layer of developing kernels. In the aleurone layer, mainly localized to starch granules and the surface of the plasma membrane, forming a uniform layer, also abundant in the intercellular space. In the endosperm, mainly localized to starch granules and the plasma membrane, but less abundant in the intercellular space. Not found in roots or coleoptiles.

The protein localises to the membrane. The protein resides in the secreted. Its subcellular location is the extracellular space. In terms of biological role, acts as a membranotoxin, probably through its antibacterial and antifungal activities, contributing to the defense mechanism of the plant against predators. Forms monovalent cation-selective ion channels in membranes. Has antibacterial activity against the Gram-positive bacteria S.aureus and C.michiganensis, and the Gram-negative bacteria E.coli, P.syringae pv phaseoli, A.tumefaciens and E.carotovora subsp carotovora. Acts synergistically with PINB against bacteria. Contributes to grain texture and hardness. The sequence is that of Puroindoline-A (PINA) from Triticum aestivum (Wheat).